A 168-amino-acid polypeptide reads, in one-letter code: S-ribosylhomocysteine lyase (168 aa).

The Fe cation site is built by histidine 54, histidine 58, and cysteine 128.

The protein belongs to the LuxS family. As to quaternary structure, homodimer. It depends on Fe cation as a cofactor.

It carries out the reaction S-(5-deoxy-D-ribos-5-yl)-L-homocysteine = (S)-4,5-dihydroxypentane-2,3-dione + L-homocysteine. Functionally, involved in the synthesis of autoinducer 2 (AI-2) which is secreted by bacteria and is used to communicate both the cell density and the metabolic potential of the environment. The regulation of gene expression in response to changes in cell density is called quorum sensing. Catalyzes the transformation of S-ribosylhomocysteine (RHC) to homocysteine (HC) and 4,5-dihydroxy-2,3-pentadione (DPD). The protein is S-ribosylhomocysteine lyase of Neisseria gonorrhoeae (strain ATCC 700825 / FA 1090).